The sequence spans 1782 residues: AF4/FMR2 family member lilli (1782 aa).

Disordered regions lie at residues 42–84 (NMED…PSEG), 150–313 (ASSS…PPPE), 434–515 (MPTP…QQQQ), 605–637 (GGSS…NLSR), 691–732 (EKLH…QQRY), 768–820 (GALP…LQIP), 839–891 (KVQP…SNKK), 911–1064 (VAAA…AAAS), 1091–1126 (AGNS…QHKQ), 1166–1234 (LPQS…KQGQ), 1296–1327 (ARQH…TPKD), 1386–1420 (LKQE…EQLS), 1450–1484 (QESA…QQQQ), and 1674–1701 (GNTP…GKIV). Positions 54–80 (REKYERQQGIQSDDRETSLFGEPRRLN) are enriched in basic and acidic residues. Composition is skewed to low complexity over residues 164–180 (QQQQ…QQQQ) and 211–260 (PSSS…MSSP). Pro residues predominate over residues 435 to 447 (PTPPKASPTPPAI). At Thr443 the chain carries Phosphothreonine. Residues 450–463 (MKTEKNHSLEKQDS) are compositionally biased toward basic and acidic residues. The segment covering 465 to 475 (LENDLELSESD) has biased composition (acidic residues). A phosphoserine mark is found at Ser472 and Ser474. Composition is skewed to low complexity over residues 484 to 515 (SAGN…QQQQ) and 609 to 622 (GSCM…SSSN). Over residues 623–634 (KTPSPTDSNRWN) the composition is skewed to polar residues. Residues 691 to 701 (EKLHDEPRHVG) are compositionally biased toward basic and acidic residues. 2 stretches are compositionally biased toward low complexity: residues 714 to 730 (QQQQ…QQQQ) and 782 to 805 (SDSG…GGSS). Residues 859–869 (PRQKKPRKKKM) are compositionally biased toward basic residues. Residues Ser878 and Ser879 each carry the phosphoserine modification. The segment at residues 920 to 932 (KKGRGRPRKQAQQ) is a DNA-binding region (a.T hook). Positions 929–972 (QAQQQQQQQQQQLQQSGNLSSASASSSQAKGPTLTAAKKPLAKA) are enriched in low complexity. Ser949 and Ser951 each carry phosphoserine. A compositionally biased stretch (polar residues) spans 973–982 (SVSNSNSTAP). Composition is skewed to low complexity over residues 996–1018 (SNSS…TMAA), 1033–1064 (SSSS…AAAS), 1105–1116 (SVGSSSNSSSSS), and 1174–1196 (SSSD…SSSS). Residues 1308–1318 (AQQNGHLSSRS) are compositionally biased toward polar residues. Positions 1450 to 1460 (QESAANGSPNK) are enriched in polar residues. Ser1457 bears the Phosphoserine mark. 2 stretches are compositionally biased toward low complexity: residues 1461–1484 (LQQQ…QQQQ) and 1674–1694 (GNTP…SGSN).

Belongs to the AF4 family.

Its subcellular location is the nucleus. Has a role in transcriptional regulation. Acts in parallel with the Ras/MAPK and the PI3K/PKB pathways in the control of cell identity and cellular growth. Essential for regulation of the cytoskeleton and cell growth but not for cell proliferation or growth rate. Required specifically for the microtubule-based basal transport of lipid droplets. Plays a partially redundant function downstream of Raf in cell fate specification in the developing eye. Pair-rule protein that regulates embryonic cellularization, gastrulation and segmentation. The sequence is that of AF4/FMR2 family member lilli from Drosophila mojavensis (Fruit fly).